The sequence spans 174 residues: uncharacterized protein (174 aa).

A helical membrane pass occupies residues 126–146 (AIDEFIITVIPVVLGSGIPLF).

This sequence to B.subtilis YyaP.

It is found in the membrane. This is an uncharacterized protein from Bacillus subtilis (strain 168).